Reading from the N-terminus, the 155-residue chain is Small ribosomal subunit protein uS7c (155 aa).

This sequence belongs to the universal ribosomal protein uS7 family. Part of the 30S ribosomal subunit.

It localises to the plastid. Its subcellular location is the chloroplast. In terms of biological role, one of the primary rRNA binding proteins, it binds directly to 16S rRNA where it nucleates assembly of the head domain of the 30S subunit. The polypeptide is Small ribosomal subunit protein uS7c (rps7) (Typha angustifolia (Narrow leaf cattail)).